The chain runs to 104 residues: MKVHVRKNDTVVVISGKDKGKTGEVLRVIPKTGKVVVKGVNLVKKHQKPNRQNMQGGIIEMEAAINSSKVMLFCEKCKKATRISHKLLEDGAKVRVCKKCGETF.

Belongs to the universal ribosomal protein uL24 family. As to quaternary structure, part of the 50S ribosomal subunit.

Functionally, one of two assembly initiator proteins, it binds directly to the 5'-end of the 23S rRNA, where it nucleates assembly of the 50S subunit. In terms of biological role, one of the proteins that surrounds the polypeptide exit tunnel on the outside of the subunit. The polypeptide is Large ribosomal subunit protein uL24 (Clostridium perfringens (strain ATCC 13124 / DSM 756 / JCM 1290 / NCIMB 6125 / NCTC 8237 / Type A)).